The sequence spans 401 residues: CLIP domain-containing serine protease B9 (401 aa).

Residues 1–26 (MTSYNRSVAWLTVCVLLALHIGGSHQ) form the signal peptide. The Clip domain maps to 30–85 (QCTTPTRLRGRCISIYECDSILDYFKQRILTWEEREFLRKSQCTGATSGRQPFVCC). Disulfide bonds link Cys-31–Cys-84, Cys-41–Cys-72, and Cys-47–Cys-85. N-linked (GlcNAc...) asparagine glycosylation occurs at Asn-88. A Peptidase S1 domain is found at 148–400 (IYGGQNADID…YMAWVRSNIK (253 aa)). Cysteines 178 and 194 form a disulfide. Catalysis depends on charge relay system residues His-193 and Asp-257. Intrachain disulfides connect Cys-322–Cys-339 and Cys-349–Cys-376. The N-linked (GlcNAc...) asparagine glycan is linked to Asn-330. The Charge relay system role is filled by Ser-353.

This sequence belongs to the peptidase S1 family. CLIP subfamily. As to quaternary structure, forms a covalent heterodimer with SRPN2; the interaction inhibits CLIPB9 protease activity. Post-translationally, proteolytic cleavage is necessary for activation.

The protein resides in the secreted. Inhibited by serpin SRPN2. Its function is as follows. Serine protease that functions in the melanization-mediated immune response. Cleaves and activates prophenoloxidase (PPO), which is required for the activation of the prophenoloxidase cascade probably following the recognition of pathogen-derived products. The sequence is that of CLIP domain-containing serine protease B9 from Anopheles gambiae (African malaria mosquito).